Reading from the N-terminus, the 637-residue chain is Biosynthetic arginine decarboxylase (637 aa).

The residue at position 101 (Lys101) is an N6-(pyridoxal phosphate)lysine. 286–296 is a substrate binding site; it reads FDVGGGLAVDY.

This sequence belongs to the Orn/Lys/Arg decarboxylase class-II family. SpeA subfamily. It depends on Mg(2+) as a cofactor. The cofactor is pyridoxal 5'-phosphate.

The enzyme catalyses L-arginine + H(+) = agmatine + CO2. It participates in amine and polyamine biosynthesis; agmatine biosynthesis; agmatine from L-arginine: step 1/1. In terms of biological role, catalyzes the biosynthesis of agmatine from arginine. The chain is Biosynthetic arginine decarboxylase from Shewanella baltica (strain OS223).